The following is a 293-amino-acid chain: Lipoyl synthase (293 aa).

Residues C47, C52, C58, C73, C77, C80, and S285 each contribute to the [4Fe-4S] cluster site. One can recognise a Radical SAM core domain in the interval 59 to 274; sequence WSEGTATFMI…EKIGLELGFR (216 aa).

This sequence belongs to the radical SAM superfamily. Lipoyl synthase family. The cofactor is [4Fe-4S] cluster.

It localises to the cytoplasm. It catalyses the reaction [[Fe-S] cluster scaffold protein carrying a second [4Fe-4S](2+) cluster] + N(6)-octanoyl-L-lysyl-[protein] + 2 oxidized [2Fe-2S]-[ferredoxin] + 2 S-adenosyl-L-methionine + 4 H(+) = [[Fe-S] cluster scaffold protein] + N(6)-[(R)-dihydrolipoyl]-L-lysyl-[protein] + 4 Fe(3+) + 2 hydrogen sulfide + 2 5'-deoxyadenosine + 2 L-methionine + 2 reduced [2Fe-2S]-[ferredoxin]. It participates in protein modification; protein lipoylation via endogenous pathway; protein N(6)-(lipoyl)lysine from octanoyl-[acyl-carrier-protein]: step 2/2. Its function is as follows. Catalyzes the radical-mediated insertion of two sulfur atoms into the C-6 and C-8 positions of the octanoyl moiety bound to the lipoyl domains of lipoate-dependent enzymes, thereby converting the octanoylated domains into lipoylated derivatives. The sequence is that of Lipoyl synthase from Christiangramia forsetii (strain DSM 17595 / CGMCC 1.15422 / KT0803) (Gramella forsetii).